The sequence spans 96 residues: Beta-defensin 132 (96 aa).

The first 22 residues, methionine 1 to glycine 22, serve as a signal peptide directing secretion. 3 disulfides stabilise this stretch: cysteine 27/cysteine 55, cysteine 35/cysteine 49, and cysteine 39/cysteine 56. The interval histidine 74–serine 96 is disordered. A compositionally biased stretch (basic residues) spans glutamine 76–lysine 87.

It belongs to the beta-defensin family.

Its subcellular location is the secreted. Has antibacterial activity. The chain is Beta-defensin 132 (DEFB132) from Hylobates lar (Lar gibbon).